The primary structure comprises 462 residues: Cysteine--tRNA ligase (462 aa).

Zn(2+) is bound at residue Cys-28. Residues 30 to 40 (VTIYDLCHIGH) carry the 'HIGH' region motif. 3 residues coordinate Zn(2+): Cys-211, His-236, and Glu-240. Positions 268-272 (KMSKS) match the 'KMSKS' region motif. Residue Lys-271 coordinates ATP.

The protein belongs to the class-I aminoacyl-tRNA synthetase family. Monomer. Zn(2+) is required as a cofactor.

Its subcellular location is the cytoplasm. It catalyses the reaction tRNA(Cys) + L-cysteine + ATP = L-cysteinyl-tRNA(Cys) + AMP + diphosphate. The sequence is that of Cysteine--tRNA ligase from Aliivibrio salmonicida (strain LFI1238) (Vibrio salmonicida (strain LFI1238)).